The sequence spans 430 residues: Type 3 secretion system ATPase (430 aa).

162-167 (GCGKTF) is an ATP binding site.

This sequence belongs to the ATPase alpha/beta chains family. T3SS ATPase subfamily. As to quaternary structure, the core secretion machinery of the T3SS is composed of approximately 20 different proteins, including cytoplasmic components, a base, an export apparatus and a needle. This subunit is part of the cytosolic complex. Forms homohexamers. Interacts directly with MxiN/SctL (stator protein) and Spa13/SctO (stalk protein). Can form a soluble complex with Spa33/SctQ, MxiN/SctL and MxiK/SctK.

Its subcellular location is the cytoplasm. The enzyme catalyses ATP + H2O + cellular proteinSide 1 = ADP + phosphate + cellular proteinSide 2.. Its activity is regulated as follows. Oligomerization increases ATPase activity. Monomeric forms exhibit low-level ATPase activity by forming short-lived oligomers with active site contributions from at least two protomers. In contrast, oligomers exhibit enhanced ATP hydrolysis rates that likely result from multiple preformed active sites within the oligomeric complex. Oligomerization is important for both enzyme activation and T3SS function. Activity is regulated by MxiN/SctL, which differentially regulates the activity of the monomer and the oligomer: it up-regulates the ATPase activity of the monomer, while it down-regulates the activity of the oligomer. Functionally, ATPase component of the type III secretion system (T3SS), also called injectisome, which is used to inject bacterial effector proteins into eukaryotic host cells. Acts as a molecular motor to provide the energy that is required for the export of proteins. Required for type III secretion apparatus (T3SA) formation, proper protein secretion, host cell invasion and virulence. May play a critical role in T3SS substrate recognition, disassembly of the effector/chaperone complex and unfolding of the effector in an ATP-dependent manner prior to secretion. The protein is Type 3 secretion system ATPase of Shigella flexneri.